The primary structure comprises 307 residues: Probable inactive peptidyl-prolyl cis-trans isomerase-like 6 (307 aa).

Residues 141-304 (FLDISIDLYP…QNCVITASGQ (164 aa)) enclose the PPIase cyclophilin-type domain.

This sequence belongs to the cyclophilin-type PPIase family.

Functionally, probable inactive PPIase with no peptidyl-prolyl cis-trans isomerase activity. This is Probable inactive peptidyl-prolyl cis-trans isomerase-like 6 from Bos taurus (Bovine).